The sequence spans 496 residues: Proline--tRNA ligase (496 aa).

It belongs to the class-II aminoacyl-tRNA synthetase family. ProS type 3 subfamily. In terms of assembly, homodimer.

Its subcellular location is the cytoplasm. It carries out the reaction tRNA(Pro) + L-proline + ATP = L-prolyl-tRNA(Pro) + AMP + diphosphate. Catalyzes the attachment of proline to tRNA(Pro) in a two-step reaction: proline is first activated by ATP to form Pro-AMP and then transferred to the acceptor end of tRNA(Pro). This Phocaeicola vulgatus (strain ATCC 8482 / DSM 1447 / JCM 5826 / CCUG 4940 / NBRC 14291 / NCTC 11154) (Bacteroides vulgatus) protein is Proline--tRNA ligase.